A 172-amino-acid polypeptide reads, in one-letter code: Transcriptional repressor NrdR (172 aa).

The segment at 3 to 34 is a zinc-finger region; it reads CPFCRHPDSRVVDSRTTDDGTSIRRRRQCPDC. Positions 46 to 136 constitute an ATP-cone domain; it reads LMVIKRSGVT…VYRAFDSLED (91 aa). The disordered stretch occupies residues 152-172; that stretch reads ERSGGGTCGTGTVPVPAGTAD. Over residues 161–172 the composition is skewed to low complexity; the sequence is TGTVPVPAGTAD.

The protein belongs to the NrdR family. The cofactor is Zn(2+).

Its function is as follows. Negatively regulates transcription of bacterial ribonucleotide reductase nrd genes and operons by binding to NrdR-boxes. The polypeptide is Transcriptional repressor NrdR (Streptomyces clavuligerus).